The primary structure comprises 292 residues: tRNA-cytidine(32) 2-sulfurtransferase (292 aa).

A PP-loop motif motif is present at residues 62–67 (SGGKDS). Residues Cys137, Cys140, and Cys228 each coordinate [4Fe-4S] cluster.

The protein belongs to the TtcA family. In terms of assembly, homodimer. Mg(2+) is required as a cofactor. It depends on [4Fe-4S] cluster as a cofactor.

It localises to the cytoplasm. The catalysed reaction is cytidine(32) in tRNA + S-sulfanyl-L-cysteinyl-[cysteine desulfurase] + AH2 + ATP = 2-thiocytidine(32) in tRNA + L-cysteinyl-[cysteine desulfurase] + A + AMP + diphosphate + H(+). Its pathway is tRNA modification. In terms of biological role, catalyzes the ATP-dependent 2-thiolation of cytidine in position 32 of tRNA, to form 2-thiocytidine (s(2)C32). The sulfur atoms are provided by the cysteine/cysteine desulfurase (IscS) system. This chain is tRNA-cytidine(32) 2-sulfurtransferase, found in Brucella anthropi (strain ATCC 49188 / DSM 6882 / CCUG 24695 / JCM 21032 / LMG 3331 / NBRC 15819 / NCTC 12168 / Alc 37) (Ochrobactrum anthropi).